The primary structure comprises 406 residues: MIQVSQDSIKKTDGSVASPKGYLAKGVHCGLRYSKKDLGIIISSRPAVSAAVYTQSHFQAAPIKVTQESLKKSAHLQAVIVNSANANACTGEQGLKDAYEMRRQSADMLGIEPDLVAVSSTGVIGEYLNMENITKGISLLAETEPAEGDFEEAILTTDTVIKQTCYELMIGGQKVTIGGAAKGSGMIHPNMATMLGFVTTDACIEESALQRALREITDVSFNQITVDGDTSTNDMVLVMANGCAGNERLHEEHEDWPVFKKGLQLVCTDLAKQIARDGEGATKLIEVEVNGAKSNLEAQIIAKKIVGSNLVKTAVYGTDANWGRIVVAIGDSMAAVTPEKVEIRLGGQCLFKNNEPQPFSEELAKTYLENSEVKIEVFMQEGEGKGTAWGCDLTYEYVKINASYRT.

6 residues coordinate substrate: Thr-156, Lys-182, Thr-193, Glu-279, Asn-401, and Thr-406. Residue Thr-193 is the Nucleophile of the active site.

The protein belongs to the ArgJ family. Heterotetramer of two alpha and two beta chains.

It localises to the cytoplasm. The enzyme catalyses N(2)-acetyl-L-ornithine + L-glutamate = N-acetyl-L-glutamate + L-ornithine. It carries out the reaction L-glutamate + acetyl-CoA = N-acetyl-L-glutamate + CoA + H(+). It functions in the pathway amino-acid biosynthesis; L-arginine biosynthesis; L-ornithine and N-acetyl-L-glutamate from L-glutamate and N(2)-acetyl-L-ornithine (cyclic): step 1/1. Its pathway is amino-acid biosynthesis; L-arginine biosynthesis; N(2)-acetyl-L-ornithine from L-glutamate: step 1/4. Functionally, catalyzes two activities which are involved in the cyclic version of arginine biosynthesis: the synthesis of N-acetylglutamate from glutamate and acetyl-CoA as the acetyl donor, and of ornithine by transacetylation between N(2)-acetylornithine and glutamate. In Bacillus licheniformis (strain ATCC 14580 / DSM 13 / JCM 2505 / CCUG 7422 / NBRC 12200 / NCIMB 9375 / NCTC 10341 / NRRL NRS-1264 / Gibson 46), this protein is Arginine biosynthesis bifunctional protein ArgJ.